A 127-amino-acid polypeptide reads, in one-letter code: Protein ApaG (127 aa).

Positions 2-127 constitute an ApaG domain; the sequence is SELVEHIQVH…FRLAGPNQVH (126 aa).

The chain is Protein ApaG from Chromohalobacter salexigens (strain ATCC BAA-138 / DSM 3043 / CIP 106854 / NCIMB 13768 / 1H11).